Here is a 1538-residue protein sequence, read N- to C-terminus: Lhr helicase/uracil glycosylase (1538 aa).

Residues Met1 to Asp897 are lhr-Core. Residues Gln34, Lys57, Thr58, Asp179, Glu180, Ile398, Arg415, and His418 each contribute to the ATP site. One can recognise a Helicase ATP-binding domain in the interval Trp38–Val235. The DEVH box signature appears at Asp179 to His182. The Helicase C-terminal domain maps to Gly284 to Asp462. The beta-sheet bundle stretch occupies residues Val463–Arg552. The segment at Gly553 to Glu623 is WH domain. Residues Gly624–Asp897 form a domain 4 region. Residues Ser898–Gly1538 are lhr-CTD. The tract at residues Ser1287 to Pro1312 is disordered. Basic residues predominate over residues Ser1292–Arg1303.

It belongs to the Lhr helicase family. Homooligomerizes, probably a homotetramer. Requires Ca(2+) as cofactor. The cofactor is Uracil deglycosylase activity does not require a cofactor..

The enzyme catalyses Couples ATP hydrolysis with the unwinding of duplex DNA by translocating in the 3'-5' direction.. It catalyses the reaction ATP + H2O = ADP + phosphate + H(+). The catalysed reaction is Hydrolyzes single-stranded DNA or mismatched double-stranded DNA and polynucleotides, releasing free uracil.. In terms of biological role, a 3'-5' helicase probably involved in DNA repair. Translocates in an ATP-dependent manner 3'-to-5' on single-stranded (ss)DNA, unwinding any encountered duplex nucleic acid. An RNA:DNA hybrid with a 3'-ssDNA loading strand is a 4.5-fold better helicase substrate than 3'-tailed double-stranded (ds)DNA; substrates where the helicase loads on a 3'-ssRNA tail (DNA:RNA and RNA:RNA) are not unwound. Unlike its M.smegmatis counterpart, the ATPase is not ssDNA-dependent. Forms a clamp around the ssDNA loading strand. Functionally, excises uracil residues from DNA; forked DNA with a dU residue is the best substrate followed by ssDNA. Inactive on dsDNA with a dU residue or DNA with an 8-oxoguanine residue. Uracil residues in DNA can arise as a result of misincorporation of dUMP residues by DNA polymerase or due to deamination of cytosine. The chain is Lhr helicase/uracil glycosylase from Escherichia coli (strain K12).